Here is a 159-residue protein sequence, read N- to C-terminus: Pupal cuticle protein Edg-91 (159 aa).

Positions 1 to 21 are cleaved as a signal peptide; that stretch reads MALVRVSCMLALLLIAGQGQA.

As to expression, larval (posterior) and imaginal (anterior) epidermis.

Functionally, component of the pupal cuticle. The protein is Pupal cuticle protein Edg-91 (Edg91) of Drosophila melanogaster (Fruit fly).